A 79-amino-acid chain; its full sequence is MARIGVENSLTDVQQALQQQGHEVVTLNSEQDAQGCDCCVVTGQDSNVMGIADTSIKGSVITAHGLTTDEICQQVESRT.

Belongs to the UPF0180 family.

This Bacillus cereus (strain B4264) protein is UPF0180 protein BCB4264_A1446.